The primary structure comprises 466 residues: VGFKAGVKEYKLTYYTPEYETKDTDILAAFRVTPQPGVPPEEAGAAVAAESSTGTWTTVWTDGLTSLDRYKGRCYNIEPVPGETDQYICYVAYPLDLFEEGSVTNMFTSIVGNVFGFKALRALRLEDLRIPPAYIKTFQGPPHGIQVERDKLNKYGRPLLGCTIKPKLGLSAKNYGRACYECLRGGLDFTKDDENVNSQPFMRWRDRFLFCAEAIYKSQAETGEIKGHYLNATAGTCEEMIKRAVFARELGVPIVMHDYLTGGFTANTSLAHYCRDNGLLLHIHRAMHAVIDRQKNHGMHFRVLAKALRLSGGDHIHAGTVVGKLEGERDITLGFVDLLRDDFVEKDRSRGIYFTQDWVSLPGVIPVASGGIHVWHMPALTEIFGDDSVLQFGGGTLGHPWGNAPGAVANRVAVEACVQARNEGRDLAAEGNAIIREASKWSPELAAACEVWKELKFEFQAVDTLD.

Lysine 4 carries the N6,N6,N6-trimethyllysine modification. Positions 113 and 163 each coordinate substrate. Lysine 165 functions as the Proton acceptor in the catalytic mechanism. Lysine 167 lines the substrate pocket. Mg(2+) contacts are provided by lysine 191, aspartate 193, and glutamate 194. Lysine 191 is subject to N6-carboxylysine. The active-site Proton acceptor is the histidine 284. Residues arginine 285, histidine 317, and serine 369 each contribute to the substrate site.

Belongs to the RuBisCO large chain family. Type I subfamily. As to quaternary structure, heterohexadecamer of 8 large chains and 8 small chains; disulfide-linked. The disulfide link is formed within the large subunit homodimers. It depends on Mg(2+) as a cofactor. Post-translationally, the disulfide bond which can form in the large chain dimeric partners within the hexadecamer appears to be associated with oxidative stress and protein turnover.

The protein localises to the plastid. Its subcellular location is the chloroplast. The enzyme catalyses 2 (2R)-3-phosphoglycerate + 2 H(+) = D-ribulose 1,5-bisphosphate + CO2 + H2O. It carries out the reaction D-ribulose 1,5-bisphosphate + O2 = 2-phosphoglycolate + (2R)-3-phosphoglycerate + 2 H(+). Functionally, ruBisCO catalyzes two reactions: the carboxylation of D-ribulose 1,5-bisphosphate, the primary event in carbon dioxide fixation, as well as the oxidative fragmentation of the pentose substrate in the photorespiration process. Both reactions occur simultaneously and in competition at the same active site. The polypeptide is Ribulose bisphosphate carboxylase large chain (Aphelandra sinclairiana (Orange shrimp plant)).